Reading from the N-terminus, the 78-residue chain is Large ribosomal subunit protein bL28 (78 aa).

This sequence belongs to the bacterial ribosomal protein bL28 family.

The sequence is that of Large ribosomal subunit protein bL28 from Synechococcus sp. (strain ATCC 27144 / PCC 6301 / SAUG 1402/1) (Anacystis nidulans).